A 116-amino-acid chain; its full sequence is NADH-ubiquinone oxidoreductase chain 3 (116 aa).

3 helical membrane passes run leucine 3–phenylalanine 23, phenylalanine 56–leucine 76, and leucine 87–tryptophan 107.

It belongs to the complex I subunit 3 family.

It is found in the mitochondrion membrane. It carries out the reaction a ubiquinone + NADH + 5 H(+)(in) = a ubiquinol + NAD(+) + 4 H(+)(out). Core subunit of the mitochondrial membrane respiratory chain NADH dehydrogenase (Complex I) that is believed to belong to the minimal assembly required for catalysis. Complex I functions in the transfer of electrons from NADH to the respiratory chain. The immediate electron acceptor for the enzyme is believed to be ubiquinone. This chain is NADH-ubiquinone oxidoreductase chain 3 (MT-ND3), found in Gadus morhua (Atlantic cod).